The sequence spans 128 residues: Spore germination protein 1/2/3-related protein (128 aa).

The first 26 residues, 1–26 (MNIRNTLVLLVSTVLVLMSCSIGCYA), serve as a signal peptide directing secretion. Residues Asn-55 and Asn-119 are each glycosylated (N-linked (GlcNAc...) asparagine).

The protein belongs to the Dictyostelium gerABC family.

Its subcellular location is the secreted. The chain is Spore germination protein 1/2/3-related protein from Dictyostelium discoideum (Social amoeba).